The chain runs to 170 residues: Photosystem I assembly protein Ycf3 (170 aa).

TPR repeat units follow at residues 35 to 68, 72 to 105, and 120 to 153; these read AFTYYRDGMLAQSEGNYAEALQNYYEAMRLEIDP, SYILYNIGLIHTSNGEHTKALEYYFRALERNPFL, and GEQAILQGDSEIAEAWFDQAAEYWKQAIALTPGN.

This sequence belongs to the Ycf3 family.

It is found in the plastid. The protein resides in the chloroplast thylakoid membrane. In terms of biological role, essential for the assembly of the photosystem I (PSI) complex. May act as a chaperone-like factor to guide the assembly of the PSI subunits. The chain is Photosystem I assembly protein Ycf3 from Oryza sativa (Rice).